The sequence spans 98 residues: Large ribosomal subunit protein uL23 (98 aa).

This sequence belongs to the universal ribosomal protein uL23 family. As to quaternary structure, part of the 50S ribosomal subunit. Contacts protein L29, and trigger factor when it is bound to the ribosome.

In terms of biological role, one of the early assembly proteins it binds 23S rRNA. One of the proteins that surrounds the polypeptide exit tunnel on the outside of the ribosome. Forms the main docking site for trigger factor binding to the ribosome. The polypeptide is Large ribosomal subunit protein uL23 (Saccharophagus degradans (strain 2-40 / ATCC 43961 / DSM 17024)).